A 433-amino-acid polypeptide reads, in one-letter code: Serine--tRNA ligase (433 aa).

L-serine is bound at residue Thr235–Glu237. Arg266–Glu268 serves as a coordination point for ATP. Residue Glu289 participates in L-serine binding. Glu353–Ser356 contacts ATP. L-serine is bound at residue Ser388.

The protein belongs to the class-II aminoacyl-tRNA synthetase family. Type-1 seryl-tRNA synthetase subfamily. In terms of assembly, homodimer. The tRNA molecule binds across the dimer.

It is found in the cytoplasm. It catalyses the reaction tRNA(Ser) + L-serine + ATP = L-seryl-tRNA(Ser) + AMP + diphosphate + H(+). It carries out the reaction tRNA(Sec) + L-serine + ATP = L-seryl-tRNA(Sec) + AMP + diphosphate + H(+). Its pathway is aminoacyl-tRNA biosynthesis; selenocysteinyl-tRNA(Sec) biosynthesis; L-seryl-tRNA(Sec) from L-serine and tRNA(Sec): step 1/1. Catalyzes the attachment of serine to tRNA(Ser). Is also able to aminoacylate tRNA(Sec) with serine, to form the misacylated tRNA L-seryl-tRNA(Sec), which will be further converted into selenocysteinyl-tRNA(Sec). This is Serine--tRNA ligase from Burkholderia thailandensis (strain ATCC 700388 / DSM 13276 / CCUG 48851 / CIP 106301 / E264).